The following is a 1443-amino-acid chain: Cleavage and polyadenylation specificity factor subunit 1 (1443 aa).

4 disordered regions span residues 404-435, 546-570, 715-777, and 901-921; these read PASA…AAGK, EEDN…DDGR, GGAR…PAPF, and FREK…AEEG. Basic and acidic residues predominate over residues 410–419; it reads EAADKEEPPS. A phosphoserine mark is found at S756 and S766. A compositionally biased stretch (basic and acidic residues) spans 758-775; it reads SKEEARRSSQPPADRDPA. A Nuclear localization signal motif is present at residues 893–908; the sequence is KKVPHNINFREKKPKP.

It belongs to the CPSF1 family. As to quaternary structure, component of the cleavage and polyadenylation specificity factor (CPSF) complex, composed of CPSF1, CPSF2, CPSF3, CPSF4 and FIP1L1. Found in a complex with CPSF1, FIP1L1 and PAPOLA. Interacts with FIP1L1, TENT2/GLD2 and SRRM1. Interacts with TUT1; the interaction is direct and mediates the recruitment of the CPSF complex on the 3'UTR of selected pre-mRNAs. Post-translationally, the N-terminus is blocked. In terms of tissue distribution, widely expressed, with high expression in the retina.

The protein localises to the nucleus. The protein resides in the nucleoplasm. Component of the cleavage and polyadenylation specificity factor (CPSF) complex that plays a key role in pre-mRNA 3'-end formation, recognizing the AAUAAA signal sequence and interacting with poly(A) polymerase and other factors to bring about cleavage and poly(A) addition. This subunit is involved in the RNA recognition step of the polyadenylation reaction. May play a role in eye morphogenesis and the development of retinal ganglion cell projections to the midbrain. The sequence is that of Cleavage and polyadenylation specificity factor subunit 1 (CPSF1) from Homo sapiens (Human).